The chain runs to 570 residues: Hydroxylamine reductase (570 aa).

[4Fe-4S] cluster contacts are provided by Cys5, Cys8, Cys17, and Cys23. The hybrid [4Fe-2O-2S] cluster site is built by His266, Glu290, Cys334, Cys425, Cys453, Cys478, Glu513, and Lys515. A Cysteine persulfide modification is found at Cys425.

This sequence belongs to the HCP family. [4Fe-4S] cluster serves as cofactor. It depends on hybrid [4Fe-2O-2S] cluster as a cofactor.

Its subcellular location is the cytoplasm. It catalyses the reaction A + NH4(+) + H2O = hydroxylamine + AH2 + H(+). Functionally, catalyzes the reduction of hydroxylamine to form NH(3) and H(2)O. This Clostridium botulinum (strain Loch Maree / Type A3) protein is Hydroxylamine reductase.